Reading from the N-terminus, the 103-residue chain is N(4)-acetylcytidine amidohydrolase (103 aa).

The region spanning 6–101 is the ASCH domain; it reads ITFFQRFQDD…QTQFYVIEFK (96 aa). The Proton acceptor role is filled by Lys21. Thr24 functions as the Nucleophile in the catalytic mechanism. Catalysis depends on Glu74, which acts as the Proton donor.

This sequence belongs to the N(4)-acetylcytidine amidohydrolase family.

The catalysed reaction is N(4)-acetylcytidine + H2O = cytidine + acetate + H(+). It catalyses the reaction N(4)-acetyl-2'-deoxycytidine + H2O = 2'-deoxycytidine + acetate + H(+). The enzyme catalyses N(4)-acetylcytosine + H2O = cytosine + acetate + H(+). In terms of biological role, catalyzes the hydrolysis of N(4)-acetylcytidine (ac4C). This is N(4)-acetylcytidine amidohydrolase (yqfB) from Escherichia coli (strain K12 / MC4100 / BW2952).